Consider the following 857-residue polypeptide: Trehalose transporter 1 (857 aa).

Disordered stretches follow at residues 1-28 (MSGRDNRGAGGGGGGHQPLSNAMGKLKE) and 62-202 (DPFL…QKAT). Over 1 to 392 (MSGRDNRGAG…VYRPTTNPIY (392 aa)) the chain is Cytoplasmic. Ala9 carries the post-translational modification Phosphothreonine. A Phosphoserine modification is found at Gly12. Over residues 69 to 81 (VSPQRHPQNTVRT) the composition is skewed to polar residues. Residues 134-143 (EIREHRDRQQ) are compositionally biased toward basic and acidic residues. Over residues 171 to 181 (GNSNTNSNKAA) the composition is skewed to polar residues. Residues Ser248, Ser249, and Ser250 each carry the phosphoserine modification. Disordered regions lie at residues 249–269 (SSEEEFHKTRREFQGRKHQSL) and 280–299 (VLQGSSTDSDEEGEDAEHKR). A phosphoserine mark is found at Ser320 and Ser322. Residues 327–346 (LTSRQHFQQQRSISTDSRKS) form a disordered region. Residues 330 to 341 (RQHFQQQRSIST) are compositionally biased toward polar residues. The chain crosses the membrane as a helical span at residues 393–413 (IWTQVLAALSVSLGSLVVGFV). Topologically, residues 414–440 (SAYTSPALVSMTDRNITSFEVTQDAGS) are extracellular. The N-linked (GlcNAc...) asparagine glycan is linked to Asn428. A helical transmembrane segment spans residues 441-461 (WVGGIMPLAGLAGGIAGGPLI). The Cytoplasmic portion of the chain corresponds to 462–473 (EYLGRRNTILAT). The helical transmembrane segment at 474-494 (AVPFIVSSLLIACAVNVAMVL) threads the bilayer. Over 495–497 (CGR) the chain is Extracellular. The chain crosses the membrane as a helical span at residues 498–518 (FLAGFCVGIASLSLPVYLGET). The Cytoplasmic segment spans residues 519–528 (VQPEVRGTLG). Residues 529–549 (LLPTAFGNIGILLCFVAGSFM) form a helical membrane-spanning segment. Residue Asn550 is glycosylated (N-linked (GlcNAc...) asparagine). Over 550 to 552 (NWS) the chain is Extracellular. A helical transmembrane segment spans residues 553–573 (MLAFLGAALPVPFLILMFLIP). Topologically, residues 574 to 636 (ETPRWFVGRG…ELLKLNNLKP (63 aa)) are cytoplasmic. The helical transmembrane segment at 637–657 (LSISLGLMFFQQFSGINAVIF) threads the bilayer. Residues 658–673 (YTVQIFKDAGSTIDGN) lie on the Extracellular side of the membrane. Residues 674–694 (LCTIIVGIVNFLATFIGIVLI) traverse the membrane as a helical segment. Topologically, residues 695–700 (DRAGRK) are cytoplasmic. A helical transmembrane segment spans residues 701–721 (ILLYVSDIAMVLTLFVLGGFF). At 722–740 (YCKTYGPDVSHLGWLPLTC) the chain is on the extracellular side. Residues 741–761 (FVIYILGFSLGFGPIPWLMMG) form a helical membrane-spanning segment. Residues 762-767 (EILPAK) lie on the Cytoplasmic side of the membrane. The chain crosses the membrane as a helical span at residues 768–788 (IRGSAASVATAFNWFCTFVVT). Over 789-801 (KTFQDLTVAMGAH) the chain is Extracellular. The chain crosses the membrane as a helical span at residues 802–822 (GAFWLFGAICFVGLFFVIIYV). The Cytoplasmic segment spans residues 823–857 (PETQGKTLEDIERKMMGRVRRMSSVANIKPLSFNM). 2 positions are modified to phosphoserine: Ser845 and Ser846.

The protein belongs to the major facilitator superfamily. Sugar transporter (TC 2.A.1.1) family. Trehalose transporter subfamily. Expressed in perineurial glia of the outer layer of the nervous system that forms the blood brain barrier (at protein level). Expressed in the fat body (at protein level). In terms of tissue distribution, may be specifically expressed in perineurial glia (at protein level). As to expression, may be specifically expressed in the fat body (at protein level).

The protein localises to the cell membrane. The protein resides in the vesicle. The catalysed reaction is alpha,alpha-trehalose(in) = alpha,alpha-trehalose(out). The enzyme catalyses D-glucose(out) = D-glucose(in). In terms of biological role, low-capacity facilitative transporter for trehalose. Can also transport glucose. Does not transport maltose, sucrose, lactose or fructose. Mediates the bidirectional transfer of trehalose. Responsible for the transport of trehalose synthesized in the fat body and the incorporation of trehalose into other tissues that require a carbon source, thereby regulating trehalose levels in the hemolymph. Required in glial cells of the blood brain barrier to fuel glycolysis but not required in neurons. Neurons rely on the citric acid cycle for their energy needs and utilise alanine and lactate, by-products of glial cell glycolysis released into the hemolymph, as fuel. Increased expression in glial cells of the blood brain barrier during starvation and increased cell surface localization enhances carbohydrate uptake to protect the central nervous system from restricted nutrient availability. This chain is Trehalose transporter 1, found in Drosophila melanogaster (Fruit fly).